We begin with the raw amino-acid sequence, 436 residues long: 3-ketoacyl-CoA thiolase (436 aa).

Cysteine 99 acts as the Acyl-thioester intermediate in catalysis. Active-site proton acceptor residues include histidine 392 and cysteine 422.

This sequence belongs to the thiolase-like superfamily. Thiolase family. In terms of assembly, heterotetramer of two alpha chains (FadJ) and two beta chains (FadI).

The protein resides in the cytoplasm. It catalyses the reaction an acyl-CoA + acetyl-CoA = a 3-oxoacyl-CoA + CoA. It participates in lipid metabolism; fatty acid beta-oxidation. In terms of biological role, catalyzes the final step of fatty acid oxidation in which acetyl-CoA is released and the CoA ester of a fatty acid two carbons shorter is formed. The protein is 3-ketoacyl-CoA thiolase of Escherichia coli (strain SMS-3-5 / SECEC).